We begin with the raw amino-acid sequence, 245 residues long: Transcriptional activator protein ExpR (245 aa).

Residues 173 to 238 (RSNDKDIFSQ…HAIRLGIELQ (66 aa)) form the HTH luxR-type domain. The H-T-H motif DNA-binding region spans 197–216 (YQEIALILDIKTGTVKFHIG).

Belongs to the autoinducer-regulated transcriptional regulatory protein family.

Functions as an OHLL responsive transcriptional regulator that acts in virulence (soft rot disease) through the activation of genes for plant tissue macerating enzymes. The sequence is that of Transcriptional activator protein ExpR (expR) from Pectobacterium parmentieri.